A 676-amino-acid polypeptide reads, in one-letter code: RNA helicase NPH-II (676 aa).

Residues 172 to 347 enclose the Helicase ATP-binding domain; it reads FSAWISHRPV…VFLPNPAFIH (176 aa). 185-192 contributes to the ATP binding site; sequence GGTGVGKT. Residues 296-299 carry the DEXH box motif; it reads DEVH. Residues 366–535 enclose the Helicase C-terminal domain; the sequence is NPSSRMAYIE…NYILYANKFN (170 aa).

The protein belongs to the DEAD box helicase family. DEAH subfamily. In terms of assembly, monomer.

Its subcellular location is the virion. It carries out the reaction ATP + H2O = ADP + phosphate + H(+). Its function is as follows. NTP-dependent helicase that catalyzes unidirectional unwinding of 3'tailed duplex RNAs and plays an important role during transcription of early mRNAs, presumably by preventing R-loop formation behind the elongating RNA polymerase. Might also play a role in the export of newly synthesized mRNA chains out of the core into the cytoplasm. Required for replication and propagation of viral particles. The protein is RNA helicase NPH-II (OPG084) of Bos taurus (Bovine).